A 382-amino-acid polypeptide reads, in one-letter code: MFENTNPDVMLKMKKYGYLAFWAIMVPLVPFSAFVGVESGTQDYWAWFMYAFIFGIIPVLDYLVGKDPTNPSEDVQVPTMSEEVFYRVSAIAMGFVWIAVLFYAGHIFMNNGYGLLGKIGWIVSIGTVGGIIAINLGHELIHKDPKVENWMGGLLLSSVTYAGFKVEHVRGHHVHVSTPDDASSSRYNQSLYNFLPKAFVHNFINAWSLEKKYLERKGKKNISVHNELIWWYSISALFAATFGLLWGWQGVVFFLGQSFFAALALEIINYIEHYGLHRRVNDKGRFERVTPAHSWNSNFLLTNLALFQLQRHSDHHAYAKRRYQVLRHYEESPQLPAGYATMYVLALIPPLWRKVMNPRVEAYYEGELDQLFRDGKRVNNIA.

The next 4 membrane-spanning stretches (helical) occupy residues 17–37, 45–65, 88–108, and 114–134; these read GYLAFWAIMVPLVPFSAFVGV, WAWFMYAFIFGIIPVLDYLVG, VSAIAMGFVWIAVLFYAGHIF, and GLLGKIGWIVSIGTVGGIIAI. Residues histidine 138, histidine 142, histidine 168, histidine 172, and histidine 173 each contribute to the Fe cation site. Residues 236-256 traverse the membrane as a helical segment; sequence ALFAATFGLLWGWQGVVFFLG. Histidine 312, histidine 315, and histidine 316 together coordinate Fe cation.

This sequence belongs to the fatty acid desaturase type 1 family. AlkB subfamily. Fe(3+) serves as cofactor.

The protein localises to the cell inner membrane. The enzyme catalyses octane + 2 reduced [rubredoxin] + O2 + 2 H(+) = 2 oxidized [rubredoxin] + octan-1-ol + H2O. It participates in hydrocarbon metabolism; alkane degradation. In terms of biological role, catalyzes the hydroxylation of n-alkanes in the presence of a NADH-rubredoxin reductase and rubredoxin. It preferably hydroxylases C8-C16 hydrocarbons. The polypeptide is Alkane 1-monooxygenase 2 (alkB2) (Alcanivorax borkumensis (strain ATCC 700651 / DSM 11573 / NCIMB 13689 / SK2)).